The sequence spans 215 residues: Cytochrome b6 (215 aa).

A helical transmembrane segment spans residues 32–52 (IFHCLGGITLTCFLVQVATGF). C35 provides a ligand contact to heme c. Positions 86 and 100 each coordinate heme b. A run of 3 helical transmembrane segments spans residues 90 to 110 (ASMMVLMMILHVFRVYLTGGF), 116 to 136 (LTWVTGVVLAVLTASFGVTGY), and 186 to 206 (LHTFVLPLLTAVFMLMHFPMI). The heme b site is built by H187 and H202.

The protein belongs to the cytochrome b family. PetB subfamily. The 4 large subunits of the cytochrome b6-f complex are cytochrome b6, subunit IV (17 kDa polypeptide, PetD), cytochrome f and the Rieske protein, while the 4 small subunits are PetG, PetL, PetM and PetN. The complex functions as a dimer. Requires heme b as cofactor. Heme c serves as cofactor.

The protein localises to the plastid. It localises to the chloroplast thylakoid membrane. Component of the cytochrome b6-f complex, which mediates electron transfer between photosystem II (PSII) and photosystem I (PSI), cyclic electron flow around PSI, and state transitions. The sequence is that of Cytochrome b6 from Calycanthus floridus var. glaucus (Eastern sweetshrub).